The following is a 109-amino-acid chain: Iron-sulfur cluster assembly protein CyaY (109 aa).

The protein belongs to the frataxin family.

Involved in iron-sulfur (Fe-S) cluster assembly. May act as a regulator of Fe-S biogenesis. The polypeptide is Iron-sulfur cluster assembly protein CyaY (Shewanella putrefaciens (strain CN-32 / ATCC BAA-453)).